Consider the following 435-residue polypeptide: Fez family zinc finger protein 2 (435 aa).

The short motif at 27–42 (SLAFSIERIMAKTSEP) is the Engrailed homology 1 repressor element. 6 C2H2-type zinc fingers span residues 254 to 276 (FTCEVCGKVFNAHYNLTRHMPVH), 282 to 304 (FVCKVCGKGFRQASTLCRHKIIH), 310 to 332 (HKCNQCGKAFNRSSTLNTHIRIH), 338 to 360 (FVCEFCGKGFHQKGNYKNHKLTH), 366 to 388 (YKCTICNKAFHQIYNLTFHMHTH), and 394 to 417 (FTCGTCGKGFCRNFDLKKHVRKLH).

The protein belongs to the krueppel C2H2-type zinc-finger protein family.

Its subcellular location is the nucleus. Functionally, transcription repressor. Component of the regulatory cascade that controls the development of dopaminergic (DA) and serotonergic (5HT) neurons. The polypeptide is Fez family zinc finger protein 2 (fezf2) (Xenopus tropicalis (Western clawed frog)).